A 111-amino-acid polypeptide reads, in one-letter code: Iron-sulfur cluster assembly protein CyaY (111 aa).

It belongs to the frataxin family.

Its function is as follows. Involved in iron-sulfur (Fe-S) cluster assembly. May act as a regulator of Fe-S biogenesis. The polypeptide is Iron-sulfur cluster assembly protein CyaY (Cupriavidus pinatubonensis (strain JMP 134 / LMG 1197) (Cupriavidus necator (strain JMP 134))).